The primary structure comprises 139 residues: Desampylase (139 aa).

One can recognise an MPN domain in the interval 6–139 (LSLAADARDS…EFRELSVAVE (134 aa)). Residue Glu31 is the Proton donor/acceptor of the active site. Residues His88, His90, and Asp101 each coordinate Zn(2+). The short motif at 88-101 (HSHPESDPVPSATD) is the JAMM motif element.

The protein belongs to the peptidase M67B family. In terms of assembly, monomer. Zn(2+) serves as cofactor.

The enzyme catalyses an N(6)-[small archaeal modifier protein]-[protein]-L-lysine + H2O = a [protein]-L-lysine + a [small archaeal modifier protein].. Inhibited by EDTA and N-ethylmaleimide (NEM) in vitro. In terms of biological role, metalloprotease that displays desampylase (DSAMP) activity, cleaving ubiquitin-like small archaeal modifier proteins (SAMP1, SAMP2 and SAMP3) from protein conjugates (isopeptide- and linear-linked). Thus, likely regulates sampylation and the pools of 'free' SAMP available for protein modification. Functions as a specific and not a general protease since it is unable to hydrolyze a variety of unmodified proteins otherwise hydrolyzed by proteinase K. The polypeptide is Desampylase (Haloferax volcanii (strain ATCC 29605 / DSM 3757 / JCM 8879 / NBRC 14742 / NCIMB 2012 / VKM B-1768 / DS2) (Halobacterium volcanii)).